Consider the following 272-residue polypeptide: uncharacterized protein (272 aa).

The tract at residues 193–250 is disordered; that stretch reads AFLLPNNSKGVEKSEENEDGVTDNDSSNVNSSTNESPNPTDINVCSNDDATDNTENNL. Positions 215-233 are enriched in low complexity; that stretch reads DNDSSNVNSSTNESPNPTD. Positions 235–248 are enriched in polar residues; it reads NVCSNDDATDNTEN.

It belongs to the pal1 family.

The protein localises to the cytoplasm. It localises to the nucleus. This is an uncharacterized protein from Schizosaccharomyces pombe (strain 972 / ATCC 24843) (Fission yeast).